Here is a 369-residue protein sequence, read N- to C-terminus: Peptide chain release factor 2 (369 aa).

Gln-250 is modified (N5-methylglutamine).

It belongs to the prokaryotic/mitochondrial release factor family. Post-translationally, methylated by PrmC. Methylation increases the termination efficiency of RF2.

It is found in the cytoplasm. Functionally, peptide chain release factor 2 directs the termination of translation in response to the peptide chain termination codons UGA and UAA. The chain is Peptide chain release factor 2 (prfB) from Rickettsia typhi (strain ATCC VR-144 / Wilmington).